The following is a 181-amino-acid chain: Ribosome maturation factor RimM (181 aa).

One can recognise a PRC barrel domain in the interval 100–177; it reads EEGFYWMQLI…QIQVDWQLED (78 aa).

The protein belongs to the RimM family. In terms of assembly, binds ribosomal protein uS19.

It is found in the cytoplasm. Functionally, an accessory protein needed during the final step in the assembly of 30S ribosomal subunit, possibly for assembly of the head region. Essential for efficient processing of 16S rRNA. May be needed both before and after RbfA during the maturation of 16S rRNA. It has affinity for free ribosomal 30S subunits but not for 70S ribosomes. This is Ribosome maturation factor RimM from Hydrogenovibrio crunogenus (strain DSM 25203 / XCL-2) (Thiomicrospira crunogena).